Consider the following 119-residue polypeptide: MSYINKPGKTRAWRKMVSRQQVSDVISHGSIVTTKTKAKESQRHVDHLITLAKKNTLASRRAAAAILLGTNQHSADDLLRKLFNELGPKYANRAGGYTRVIKLGNRPGDNTEEAVLQLV.

Belongs to the bacterial ribosomal protein bL17 family. Part of the 50S ribosomal subunit. Contacts protein L32.

The polypeptide is Large ribosomal subunit protein bL17 (Ureaplasma parvum serovar 3 (strain ATCC 27815 / 27 / NCTC 11736)).